The following is a 483-amino-acid chain: Dual specificity protein phosphatase 10 (483 aa).

In terms of domain architecture, Rhodanese spans 169–286; the sequence is PSQGPVIIDC…FKQNHGNLCD (118 aa). The interaction with MAP kinases stretch occupies residues 200–216; that stretch reads KISRRRLQQGKITVLDL. The region spanning 322–465 is the Tyrosine-protein phosphatase domain; sequence ELTPILPFLF…LLEFEEDLNN (144 aa). Cys409 serves as the catalytic Phosphocysteine intermediate.

The protein belongs to the protein-tyrosine phosphatase family. Non-receptor class dual specificity subfamily. Monomer. Interacts with MAPK14.

It is found in the cytoplasm. Its subcellular location is the nucleus. The enzyme catalyses O-phospho-L-tyrosyl-[protein] + H2O = L-tyrosyl-[protein] + phosphate. The catalysed reaction is O-phospho-L-seryl-[protein] + H2O = L-seryl-[protein] + phosphate. It catalyses the reaction O-phospho-L-threonyl-[protein] + H2O = L-threonyl-[protein] + phosphate. Functionally, protein phosphatase involved in the inactivation of MAP kinases. Has a specificity for the MAPK11/MAPK12/MAPK13/MAPK14 subfamily. It preferably dephosphorylates p38. This is Dual specificity protein phosphatase 10 (Dusp10) from Mus musculus (Mouse).